The chain runs to 319 residues: MSESLKIIFAGTPDFSACHLQHLLSHRQKILGVFTQPDRPAGRGKKLAFSPVKILATQHHIPVYQPHSLGLKEEQQSILDLDADVMVVVAYGLLLPQAVLNMPRLGCINVHPSLLPRWRGAAPIQRAIWAGDQETGVTIMQMDSGLDTGNMLYKTVYPIQPDDTGASLQAKLAALGSQDLLLTLKKMAEGKMHGETQDEQKTTYAHKLTKKEARLDWLLPAAHLERCVRAFNPWPVSYFIINEQIIKVWEAQAMPDSQQVSHLQPGTVLKADKNGIQILTSEGVLNMTKFQLPGKKIISAWDFLNSRNEWFQIGKQLLS.

113 to 116 (SLLP) contributes to the (6S)-5,6,7,8-tetrahydrofolate binding site.

Belongs to the Fmt family.

It carries out the reaction L-methionyl-tRNA(fMet) + (6R)-10-formyltetrahydrofolate = N-formyl-L-methionyl-tRNA(fMet) + (6S)-5,6,7,8-tetrahydrofolate + H(+). Attaches a formyl group to the free amino group of methionyl-tRNA(fMet). The formyl group appears to play a dual role in the initiator identity of N-formylmethionyl-tRNA by promoting its recognition by IF2 and preventing the misappropriation of this tRNA by the elongation apparatus. This chain is Methionyl-tRNA formyltransferase, found in Hamiltonella defensa subsp. Acyrthosiphon pisum (strain 5AT).